Consider the following 533-residue polypeptide: GDP-fucose protein O-fucosyltransferase 4 (533 aa).

At 1–20 (MSAGCTQLVWGGRLHWGASH) the chain is on the cytoplasmic side. The chain crosses the membrane as a helical; Signal-anchor for type II membrane protein span at residues 21-37 (LLSCLLALCALWVLAAA). The Lumenal segment spans residues 38 to 533 (EPTEGGSANV…ETYIKRSMNH (496 aa)). Residues N148, N206, and N358 are each glycosylated (N-linked (GlcNAc...) asparagine). A disulfide bridge links C429 with C432. N511 is a glycosylation site (N-linked (GlcNAc...) asparagine).

The protein belongs to the glycosyltransferase 10 family.

It is found in the endoplasmic reticulum membrane. It carries out the reaction L-threonyl-[protein] + GDP-beta-L-fucose = 3-O-(alpha-L-fucosyl)-L-threonyl-[protein] + GDP + H(+). The enzyme catalyses L-seryl-[protein] + GDP-beta-L-fucose = 3-O-(alpha-L-fucosyl)-L-seryl-[protein] + GDP + H(+). Its pathway is protein modification; protein glycosylation. Protein O-fucosyltransferase that specifically catalyzes O-fucosylation of serine or threonine residues in EMI domains of target proteins. Attaches fucose through an O-glycosidic linkage. O-fucosylation of EMI domain-containing proteins may be required for facilitating protein folding and secretion. This is GDP-fucose protein O-fucosyltransferase 4 (fut11) from Xenopus tropicalis (Western clawed frog).